Consider the following 160-residue polypeptide: MLSPKRTKFRKQHRGRMRGVASKGNTIAFGQFALQAQDCGWVTARQIEASRRAMTRYIKRGGQIWIRIFPDKPVTMRPAETRMGSGKGNPEFWVAVVKPGRILFEMGGEDITEEVAKEAMRLAQYKLPVKTKFISIDKNLEAPSQEKTKNSKKSQEEVKQ.

The segment at 138-160 is disordered; it reads KNLEAPSQEKTKNSKKSQEEVKQ.

The protein belongs to the universal ribosomal protein uL16 family. As to quaternary structure, part of the 50S ribosomal subunit.

Binds 23S rRNA and is also seen to make contacts with the A and possibly P site tRNAs. The polypeptide is Large ribosomal subunit protein uL16 (Prochlorococcus marinus (strain MIT 9215)).